The chain runs to 372 residues: Aryl-hydrocarbon-interacting protein-like 1 (372 aa).

One can recognise a PPIase FKBP-type domain in the interval 53-145; sequence REVGQPMHII…DLDELQKEPQ (93 aa). TPR repeat units lie at residues 178 to 211, 230 to 263, and 264 to 297; these read VPVL…LRNL, NTLI…HPGI, and VKAY…EPSM. The interval 325–372 is disordered; it reads NMLSQGATWSPAEPPAEPPAESSTEPPAEPPAEPPAELTLTPGHPLQH.

Interacts with NUB1.

The protein resides in the cytoplasm. The protein localises to the nucleus. In terms of biological role, may be important in protein trafficking and/or protein folding and stabilization. The protein is Aryl-hydrocarbon-interacting protein-like 1 (AIPL1) of Saimiri boliviensis boliviensis (Bolivian squirrel monkey).